The chain runs to 498 residues: Glycerol kinase (498 aa).

Thr11 lines the ADP pocket. Positions 11, 12, and 13 each coordinate ATP. Thr11 contacts sn-glycerol 3-phosphate. An ADP-binding site is contributed by Arg15. Sn-glycerol 3-phosphate-binding residues include Arg81, Glu82, Tyr133, and Asp242. Positions 81, 82, 133, 242, and 243 each coordinate glycerol. ADP is bound by residues Thr264 and Gly307. The ATP site is built by Thr264, Gly307, Gln311, and Gly412. Positions 412 and 416 each coordinate ADP.

It belongs to the FGGY kinase family.

It catalyses the reaction glycerol + ATP = sn-glycerol 3-phosphate + ADP + H(+). Its pathway is polyol metabolism; glycerol degradation via glycerol kinase pathway; sn-glycerol 3-phosphate from glycerol: step 1/1. With respect to regulation, inhibited by fructose 1,6-bisphosphate (FBP). In terms of biological role, key enzyme in the regulation of glycerol uptake and metabolism. Catalyzes the phosphorylation of glycerol to yield sn-glycerol 3-phosphate. In Delftia acidovorans (strain DSM 14801 / SPH-1), this protein is Glycerol kinase.